The chain runs to 277 residues: GATA transcription factor 15 (277 aa).

A disordered region spans residues 52 to 94 (AYDDHSTVTTSPSSPSSSSTGSVDCTLSLGTPSSRRAEPVAAA). Positions 58-74 (TVTTSPSSPSSSSTGSV) are enriched in low complexity. A GATA-type zinc finger spans residues 154–179 (CANCGTASTPLWRNGPRGPKSLCNAC).

This sequence belongs to the type IV zinc-finger family. Class B subfamily.

In terms of biological role, probable transcription factor that regulates organogenesis during transition from the vegetative to the reproductive phase. Regulates the expression of CYP78A11/PLA1, HD3A and MADS1 during reproductive development in rice. May act upstream of CYP78A11/PLA1 during panicle development. Acts independently of the photoperiodic and gibberellin signaling pathways. The sequence is that of GATA transcription factor 15 from Oryza sativa subsp. indica (Rice).